The sequence spans 570 residues: Putative pyruvate decarboxylase C3G9.11c (570 aa).

Pyruvate contacts are provided by D30 and H119. Thiamine diphosphate contacts are provided by residues T396 and 419-421 (GSI). D451 is a binding site for Mg(2+). Thiamine diphosphate is bound by residues 452-453 (GS) and 478-483 (NKGYTI). Residues N478 and G480 each coordinate Mg(2+). E484 contributes to the pyruvate binding site.

The protein belongs to the TPP enzyme family. In terms of assembly, homotetramer. It depends on Mg(2+) as a cofactor. Thiamine diphosphate is required as a cofactor.

The protein resides in the cytoplasm. The protein localises to the nucleus. It catalyses the reaction a 2-oxocarboxylate + H(+) = an aldehyde + CO2. The catalysed reaction is pyruvate + H(+) = acetaldehyde + CO2. The polypeptide is Putative pyruvate decarboxylase C3G9.11c (Schizosaccharomyces pombe (strain 972 / ATCC 24843) (Fission yeast)).